A 287-amino-acid chain; its full sequence is Protease HtpX (287 aa).

Helical transmembrane passes span 4 to 24 (IFLLIATNLAVLLVASIVMSI) and 33 to 53 (GGLLVFAAIFGFGGAFISLAI). H139 is a binding site for Zn(2+). E140 is a catalytic residue. Position 143 (H143) interacts with Zn(2+). Helical transmembrane passes span 154–174 (LIQGVVNTFVIFAARVVAGII) and 195–215 (AVVFVLDMLFGILASIIVAYF). E220 lines the Zn(2+) pocket.

Belongs to the peptidase M48B family. Zn(2+) is required as a cofactor.

Its subcellular location is the cell inner membrane. The sequence is that of Protease HtpX from Shewanella sp. (strain MR-4).